The primary structure comprises 983 residues: Protein CLASP-3 (983 aa).

Disordered stretches follow at residues 356-393 (YPNRPGSRTRTSSITSTDSRDTSPTRRNSPLPPETQKA) and 666-690 (SNNIATNSGATASRETSNTSFQKES). Positions 359–372 (RPGSRTRTSSITST) are enriched in low complexity. One copy of the HEAT repeat lies at 918–956 (ITPTIIKAYQSTSSTVRKTVVYCLVAMVNRVGEQRMTPH).

The protein belongs to the CLASP family.

It localises to the cytoplasm. The protein localises to the cytoskeleton. In terms of biological role, microtubule plus-end tracking protein that promotes the stabilization of dynamic microtubules. This chain is Protein CLASP-3 (cls-3), found in Caenorhabditis elegans.